The chain runs to 54 residues: MGVREADRIQHDRVRKKREISPYLPVRDLEKSLDDRNRIYRSKSVYDPSWNTHH.

This is Protein Vpw (vpw) from Bos taurus (Bovine).